Reading from the N-terminus, the 505-residue chain is Histidine--tRNA ligase, mitochondrial (505 aa).

A mitochondrion-targeting transit peptide spans 1–31; it reads MPHLGPLRRRAWAALLGQLLRPPSTVCTRGC. At S66 the chain carries Phosphoserine. L-histidine contacts are provided by residues 130-132, R157, Q173, D177, R326, and 330-331; these read DLT and YY. N6-acetyllysine is present on K443.

The protein belongs to the class-II aminoacyl-tRNA synthetase family. As to quaternary structure, homodimer.

It is found in the mitochondrion. It carries out the reaction tRNA(His) + L-histidine + ATP = L-histidyl-tRNA(His) + AMP + diphosphate + H(+). In terms of biological role, mitochondrial aminoacyl-tRNA synthetase that catalyzes the ATP-dependent ligation of histidine to the 3'-end of its cognate tRNA, via the formation of an aminoacyl-adenylate intermediate (His-AMP). In Mus musculus (Mouse), this protein is Histidine--tRNA ligase, mitochondrial (Hars2).